Consider the following 236-residue polypeptide: UPF0257 lipoprotein YnfC (236 aa).

The signal sequence occupies residues 1 to 16 (MKYKLLPCLLAILLTG). The N-palmitoyl cysteine moiety is linked to residue Cys17. The S-diacylglycerol cysteine moiety is linked to residue Cys17.

This sequence belongs to the UPF0257 family.

The protein localises to the cell membrane. The protein is UPF0257 lipoprotein YnfC of Escherichia coli O127:H6 (strain E2348/69 / EPEC).